A 422-amino-acid polypeptide reads, in one-letter code: 5-hydroxytryptamine receptor 1A (422 aa).

Over 1–38 the chain is Extracellular; it reads MDVFSFGQGNNTTASQEPFGTGGNVTSISDVTFSYQVI. Residues Asn10, Asn11, and Asn24 are each glycosylated (N-linked (GlcNAc...) asparagine). A helical transmembrane segment spans residues 39-59; it reads TSLLLGTLIFCAVLGNACVVA. Topologically, residues 60 to 73 are cytoplasmic; the sequence is AIALERSLQNVANY. The chain crosses the membrane as a helical span at residues 74 to 98; the sequence is LIGSLAVTDLMVSVLVLPMAALYQV. The Extracellular segment spans residues 99 to 107; it reads LNKWTLGQV. A helical membrane pass occupies residues 108–132; sequence TCDLFIALDVLCCTSSILHLCAIAL. Cys109 and Cys187 form a disulfide bridge. The serotonin site is built by Asp116 and Cys120. The short motif at 133–135 is the DRY motif; important for ligand-induced conformation changes element; sequence DRY. Residues 133–152 are Cytoplasmic-facing; sequence DRYWAITDPIDYVNKRTPRR. A helical transmembrane segment spans residues 153–174; it reads AAALISLTWLIGFLISIPPMLG. The Extracellular portion of the chain corresponds to 175–193; that stretch reads WRTPEDRSDPDACTISKDH. Residues 194–216 form a helical membrane-spanning segment; sequence GYTIYSTFGAFYIPLLLMLVLYG. The Cytoplasmic segment spans residues 217–346; the sequence is RIFRAARFRI…LARERKTVKT (130 aa). The disordered stretch occupies residues 235 to 261; sequence KKGAGTSLGTSSAPPPKKSLNGQPGSG. Residues Lys345, Thr346, and Gly352 each contribute to the 1D-myo-inositol 4-phosphate site. A helical transmembrane segment spans residues 347–370; the sequence is LGIIMGTFILCWLPFFIVALVLPF. Topologically, residues 371-378 are extracellular; it reads CESSCHMP. Residues 379–403 form a helical membrane-spanning segment; sequence ALLGAIINWLGYSNSLLNPVIYAYF. The NPxxY motif; important for ligand-induced conformation changes and signaling motif lies at 396-400; sequence NPVIY. 1D-myo-inositol 4-phosphate is bound by residues Phe403, Asn404, and Lys405. At 404–422 the chain is on the cytoplasmic side; sequence NKDFQNAFKKIIKCKFCRR.

It belongs to the G-protein coupled receptor 1 family. 5-hydroxytryptamine receptor subfamily. HTR1A sub-subfamily. Heterodimer; heterodimerizes with GPER1. Interacts with YIF1B. Interacts with GPR39 and GALR1. As to expression, detected in hypothalamus, mesencephalon, amygdala, medulla, thalamus, septum and hippocampus.

Its subcellular location is the cell membrane. The protein localises to the cell projection. It is found in the dendrite. Its activity is regulated as follows. G-protein coupled receptor activity is regulated by lipids: phosphatidylinositol 4-phosphate increases HTR1A-mediated activity. In terms of biological role, G-protein coupled receptor for 5-hydroxytryptamine (serotonin). Also functions as a receptor for various drugs and psychoactive substances. Ligand binding causes a conformation change that triggers signaling via guanine nucleotide-binding proteins (G proteins) and modulates the activity of downstream effectors, such as adenylate cyclase. HTR1A is coupled to G(i)/G(o) G alpha proteins and mediates inhibitory neurotransmission: signaling inhibits adenylate cyclase activity and activates a phosphatidylinositol-calcium second messenger system that regulates the release of Ca(2+) ions from intracellular stores. Beta-arrestin family members regulate signaling by mediating both receptor desensitization and resensitization processes. The polypeptide is 5-hydroxytryptamine receptor 1A (Rattus norvegicus (Rat)).